Reading from the N-terminus, the 311-residue chain is DNA repair and recombination protein RadA (311 aa).

104 to 111 is a binding site for ATP; sequence GEFGSGKS.

The protein belongs to the eukaryotic RecA-like protein family.

In terms of biological role, involved in DNA repair and in homologous recombination. Binds and assemble on single-stranded DNA to form a nucleoprotein filament. Hydrolyzes ATP in a ssDNA-dependent manner and promotes DNA strand exchange between homologous DNA molecules. The sequence is that of DNA repair and recombination protein RadA from Methanosphaera stadtmanae (strain ATCC 43021 / DSM 3091 / JCM 11832 / MCB-3).